Here is a 419-residue protein sequence, read N- to C-terminus: Cytosine permease (419 aa).

Residues 1 to 19 (MSQDNNFSQGPVPQSARKG) lie on the Cytoplasmic side of the membrane. The chain crosses the membrane as a helical span at residues 20 to 39 (VLALTFVMLGLTFFSASMWT). The Periplasmic segment spans residues 40-51 (GGTLGTGLSYHD). A helical membrane pass occupies residues 52–71 (FFLAVLIGNLLLGIYTSFLG). The Cytoplasmic portion of the chain corresponds to 72 to 100 (YIGAKTGLTTHLLARFSFGVKGSWLPSLL). A helical membrane pass occupies residues 101–120 (LGGTQVGWFGVGVAMFAIPV). Topologically, residues 121–127 (GKATGLD) are periplasmic. Residues 128-147 (INLLIAVSGLLMTVTVFFGI) form a helical membrane-spanning segment. At 148 to 152 (SALTV) the chain is on the cytoplasmic side. Residues 153–172 (LSVIAVPAIACLGGYSVWLA) form a helical membrane-spanning segment. The Periplasmic portion of the chain corresponds to 173 to 192 (VNGMGGLDALKAVVPAQPLD). Residues 193 to 212 (FNVALALVVGSFISAGTLTA) traverse the membrane as a helical segment. The Cytoplasmic portion of the chain corresponds to 213 to 221 (DFVRFGRNA). Residues 222-242 (KLAVLVAMVAFFLGNSLMFIF) form a helical membrane-spanning segment. Over 243 to 257 (GAAGAAALGMADISD) the chain is Periplasmic. A helical membrane pass occupies residues 258–277 (VMIAQGLLLPAIVVLGLNIW). The Cytoplasmic segment spans residues 278–300 (TTNDNALYASGLGFANITGMSSK). Residues 301–320 (TLSVINGIIGTVCALWLYNN) traverse the membrane as a helical segment. Residue Phe-321 is a topological domain, periplasmic. A helical membrane pass occupies residues 322–341 (VGWLTFLSAAIPPVGGVIIA). The Cytoplasmic portion of the chain corresponds to 342-358 (DYLMNRRRYEHFATTRM). Residues 359-378 (MSVNWVAILAVALGIAAGHW) traverse the membrane as a helical segment. The Periplasmic segment spans residues 379–380 (LP). A helical transmembrane segment spans residues 381–400 (GIVPVNAVLGGALSYLILNP). Residues 401-419 (ILNRKTTAAMTHVEANSVE) lie on the Cytoplasmic side of the membrane.

This sequence belongs to the purine-cytosine permease (2.A.39) family.

The protein resides in the cell inner membrane. Functionally, required for cytosine transport into the cell. The chain is Cytosine permease (codB) from Escherichia coli O6:H1 (strain CFT073 / ATCC 700928 / UPEC).